The following is a 302-amino-acid chain: NAD kinase 2 (302 aa).

Aspartate 78 acts as the Proton acceptor in catalysis. NAD(+)-binding positions include 78 to 79, 152 to 153, aspartate 182, 193 to 198, and alanine 217; these read DG, NE, and TAYALS.

This sequence belongs to the NAD kinase family. It depends on a divalent metal cation as a cofactor.

It localises to the cytoplasm. The enzyme catalyses NAD(+) + ATP = ADP + NADP(+) + H(+). In terms of biological role, involved in the regulation of the intracellular balance of NAD and NADP, and is a key enzyme in the biosynthesis of NADP. Catalyzes specifically the phosphorylation on 2'-hydroxyl of the adenosine moiety of NAD to yield NADP. In Prochlorococcus marinus (strain MIT 9313), this protein is NAD kinase 2.